Here is a 145-residue protein sequence, read N- to C-terminus: [Ribosomal protein bS18]-alanine N-acetyltransferase (145 aa).

The N-acetyltransferase domain occupies 1–145 (MIETIVEQDF…ENAVIMALYL (145 aa)). 67-69 (LAV) is a binding site for acetyl-CoA. Catalysis depends on Glu-101, which acts as the Proton acceptor. Position 106 (Asn-106) interacts with acetyl-CoA. Tyr-113 acts as the Proton donor in catalysis.

It belongs to the acetyltransferase family. RimI subfamily.

The protein localises to the cytoplasm. The enzyme catalyses N-terminal L-alanyl-[ribosomal protein bS18] + acetyl-CoA = N-terminal N(alpha)-acetyl-L-alanyl-[ribosomal protein bS18] + CoA + H(+). In terms of biological role, acetylates the N-terminal alanine of ribosomal protein bS18. The chain is [Ribosomal protein bS18]-alanine N-acetyltransferase from Haemophilus ducreyi (strain 35000HP / ATCC 700724).